A 283-amino-acid chain; its full sequence is Formamidopyrimidine-DNA glycosylase (283 aa).

P2 acts as the Schiff-base intermediate with DNA in catalysis. E3 functions as the Proton donor in the catalytic mechanism. Residue K58 is the Proton donor; for beta-elimination activity of the active site. The DNA site is built by H100, R119, and R162. The FPG-type zinc-finger motif lies at 247–283; the sequence is RVYGREGQPCVTPGCRGLVGRIVQSGRSSFHCPECQR. Catalysis depends on R273, which acts as the Proton donor; for delta-elimination activity.

It belongs to the FPG family. Monomer. Zn(2+) is required as a cofactor.

The enzyme catalyses Hydrolysis of DNA containing ring-opened 7-methylguanine residues, releasing 2,6-diamino-4-hydroxy-5-(N-methyl)formamidopyrimidine.. It catalyses the reaction 2'-deoxyribonucleotide-(2'-deoxyribose 5'-phosphate)-2'-deoxyribonucleotide-DNA = a 3'-end 2'-deoxyribonucleotide-(2,3-dehydro-2,3-deoxyribose 5'-phosphate)-DNA + a 5'-end 5'-phospho-2'-deoxyribonucleoside-DNA + H(+). Involved in base excision repair of DNA damaged by oxidation or by mutagenic agents. Acts as a DNA glycosylase that recognizes and removes damaged bases. Has a preference for oxidized purines, such as 7,8-dihydro-8-oxoguanine (8-oxoG). Has AP (apurinic/apyrimidinic) lyase activity and introduces nicks in the DNA strand. Cleaves the DNA backbone by beta-delta elimination to generate a single-strand break at the site of the removed base with both 3'- and 5'-phosphates. In Cereibacter sphaeroides (strain ATCC 17025 / ATH 2.4.3) (Rhodobacter sphaeroides), this protein is Formamidopyrimidine-DNA glycosylase.